Reading from the N-terminus, the 341-residue chain is Protein BIG GRAIN 1-like C (341 aa).

Disordered regions lie at residues 28 to 61 (DGLQ…LTTL) and 76 to 138 (SSTT…SDDD). Positions 52–61 (NKKDDKLTTL) are enriched in basic and acidic residues. The segment covering 76-92 (SSTTTTNSSDSSSFSSS) has biased composition (low complexity). A compositionally biased stretch (basic and acidic residues) spans 105–138 (KLAEQGKRSGDERQRTKRTVMDNDSRLFSKSDDD).

The protein belongs to the BIG GRAIN 1 (BG1) plant protein family.

It is found in the cell membrane. Functionally, involved in auxin transport. Regulator of the auxin signaling pathway. The sequence is that of Protein BIG GRAIN 1-like C from Arabidopsis thaliana (Mouse-ear cress).